The primary structure comprises 202 residues: Small ribosomal subunit protein uS4 (202 aa).

An S4 RNA-binding domain is found at 93–155 (RRLDNVVRRV…ENLKNLYRGV (63 aa)).

It belongs to the universal ribosomal protein uS4 family. As to quaternary structure, part of the 30S ribosomal subunit. Contacts protein S5. The interaction surface between S4 and S5 is involved in control of translational fidelity.

One of the primary rRNA binding proteins, it binds directly to 16S rRNA where it nucleates assembly of the body of the 30S subunit. Functionally, with S5 and S12 plays an important role in translational accuracy. This chain is Small ribosomal subunit protein uS4, found in Rhodopirellula baltica (strain DSM 10527 / NCIMB 13988 / SH1).